Consider the following 66-residue polypeptide: MILVNVHAGNCDNTLKNFKKKLQRELYFRKMKEQRYYETPSAKRVRKAQEAARRIRKFARKKMYEE.

The protein belongs to the bacterial ribosomal protein bS21 family.

This chain is Small ribosomal subunit protein bS21, found in Rickettsia typhi (strain ATCC VR-144 / Wilmington).